Consider the following 314-residue polypeptide: DNA topoisomerase 1 (314 aa).

A Topo IB-type catalytic domain is found at Gly73–Val314. The active-site O-(3'-phospho-DNA)-tyrosine intermediate is the Tyr273.

This sequence belongs to the type IB topoisomerase family.

The catalysed reaction is ATP-independent breakage of single-stranded DNA, followed by passage and rejoining.. Its function is as follows. Releases the supercoiling and torsional tension of DNA introduced during the DNA replication and transcription by transiently cleaving and rejoining one strand of the DNA duplex. Introduces a single-strand break via transesterification at a target site in duplex DNA. The scissile phosphodiester is attacked by the catalytic tyrosine of the enzyme, resulting in the formation of a DNA-(3'-phosphotyrosyl)-enzyme intermediate and the expulsion of a 5'-OH DNA strand. The free DNA strand then undergoes passage around the unbroken strand thus removing DNA supercoils. Finally, in the religation step, the DNA 5'-OH attacks the covalent intermediate to expel the active-site tyrosine and restore the DNA phosphodiester backbone. In Oryctolagus cuniculus (Rabbit), this protein is DNA topoisomerase 1 (TOP1).